A 451-amino-acid polypeptide reads, in one-letter code: ESX secretion system protein YukC (451 aa).

The chain crosses the membrane as a helical span at residues 221 to 241; that stretch reads IGLGLIVLLVPALIYSMYALF. The stretch at 362 to 447 forms a coiled coil; it reads DEDIQKELDS…KKETEKKDEK (86 aa). Basic and acidic residues predominate over residues 376 to 386; that stretch reads LEKAQKERQEN. A disordered region spans residues 376-451; it reads LEKAQKERQE…EKKDEKKDDK (76 aa). The segment covering 387–397 has biased composition (polar residues); that stretch reads KQSNSETSLVD. Residues 406–451 show a composition bias toward basic and acidic residues; sequence DEEKQAEEKAAEEKAAAEEKAKKEEQKEKEDEKKETEKKDEKKDDK.

This sequence belongs to the EssB family.

It localises to the cell membrane. Required for YukE secretion. Probable component or regulator of the ESX/ESAT-6-like secretion system (BsEss). Required to deliver LXG toxins to target cells. In Bacillus subtilis (strain 168), this protein is ESX secretion system protein YukC (yukC).